The primary structure comprises 1228 residues: MCLPSHLLSTWVLFMAAQSLGKTWLPNHCRSPIKAVCNFVCDCGDCSDETQCGFHGASTIPSTSFTCNFEQDSCGWQDISTSGYRWLRDRAGAVLHGPGPHSDHTHGTDLGWYMAVGTHSGKEPSTATLRSPVMREAAPTCELRLWYHIASRDVAELRLDLTHGVETLTLWQTSGPWGPGWQELAVNTGRIQGDFKVTFSATRNATHRGAVALDDVEFRDCGLPIPQARCPLGHHHCQNKACVEPHQLCDGEDNCGDRSDEDPLICSHHMATDFETGLGPWNQLEGWTRNHSAGSMVSPAWPHRDHSRNSAYGFFLISVAKPGTTAVLYSPEFQGSVSNNCSFTFYYYLHGSEASHFQLFLQAQGLNTPQVPVLLRSRHGELGTAWVRDRVDIQSAHPFRILLAGETGPGGVVGLDDLIMSSHCMLVPAMSTLQSSLSGPVPLALYPQTSIKLPQQTCEPGHLSCGDLCVPPEQLCDFQKHCAEGEDEHKCGTTDFESASAGGWEDISVGKLQWQWVEAQEKSKPAGDANRDAPGHFLSLQKAWGQLRSEARALTPALGPSGPHCELHMAYYFQSHPQGFLALVVVENGFRELLWQAPGGGSGSWTEEKIILGARRRPFQLEFVSLVDLDGPGQQGAGVDNVTLRDCNPMVTTESDQELSCNFERDSCSWHTGHLTDAHWHRIKSHGSQLDHTTGQGFFMFLDPTDPPARGQGALLLTRPQVPVVPKECLSFWYRLYGPQIGTLCLAMRREREEDILLWSRSGTHGNRWHQAWVTLHHQPEASTKYQLLFEGLRNGYHGTMALDDIAVRPGPCWAPKSCSFEDSDCGFSPGGWGLWTHQSNASGLASWGPWIDHTTGTAQGHYMVVDTSPNVLPKGHVAALTSEEHQPLSQPACLTFWYHMSVPNPGTLRVHVEESTRRQELSISAHGRSAWRLGSVNVQAEQAWKVVFEAVAAGVEYSYMALDDISLQDGPCPQPGSCDFETGLCGWSHLPWPSLGGYSWDWSSGATPSRYPQPSVDHTLGTEAGHFAFFETSVLGPGGQAAWLRSEPLPATTVSCLRFWYYMGFPEHFYKGELRVLLSSARGQLAVWYQGGHLRDQWLQVQIELSNSEEFQIVFEATLGGQPALGPIAIDDVQYLAGQQCKQPSPSQGEVAAPVSVPVAVGGALLFFMFLVLMGLGGWHWLQKQHCPGQRSTDAAASGFANILFNADHVTLPESITSNPQSPPDLA.

The signal sequence occupies residues 1-21; sequence MCLPSHLLSTWVLFMAAQSLG. At 23–1159 the chain is on the extracellular side; the sequence is TWLPNHCRSP…GEVAAPVSVP (1137 aa). The 22-residue stretch at 28-49 folds into the LDL-receptor class A 1; truncated domain; the sequence is HCRSPIKAVCNFVCDCGDCSDE. One can recognise an MAM 1 domain in the interval 65–223; that stretch reads FTCNFEQDSC…DDVEFRDCGL (159 aa). A glycan (N-linked (GlcNAc...) asparagine) is linked at asparagine 204. An LDL-receptor class A 2 domain is found at 229–267; that stretch reads RCPLGHHHCQNKACVEPHQLCDGEDNCGDRSDEDPLICS. 3 disulfides stabilise this stretch: cysteine 230–cysteine 242, cysteine 237–cysteine 255, and cysteine 249–cysteine 266. The 157-residue stretch at 270–426 folds into the MAM 2 domain; that stretch reads MATDFETGLG…DLIMSSHCML (157 aa). N-linked (GlcNAc...) asparagine glycosylation is found at asparagine 290 and asparagine 340. The region spanning 457–492 is the LDL-receptor class A 3 domain; that stretch reads TCEPGHLSCGDLCVPPEQLCDFQKHCAEGEDEHKCG. Intrachain disulfides connect cysteine 458/cysteine 469, cysteine 465/cysteine 482, and cysteine 476/cysteine 491. 4 MAM domains span residues 492 to 649, 659 to 815, 817 to 975, and 977 to 1144; these read GTTD…DCNP, LSCN…PCWA, KSCS…PCPQ, and GSCD…QCKQ. A glycan (N-linked (GlcNAc...) asparagine) is linked at asparagine 641. Residue asparagine 841 is glycosylated (N-linked (GlcNAc...) asparagine). A helical transmembrane segment spans residues 1160–1180; the sequence is VAVGGALLFFMFLVLMGLGGW. The Cytoplasmic portion of the chain corresponds to 1181–1228; it reads HWLQKQHCPGQRSTDAAASGFANILFNADHVTLPESITSNPQSPPDLA.

Its subcellular location is the membrane. Its function is as follows. Probably involved in the sorting and selective transport of receptors and ligands across polarized epithelia. The protein is Apical endosomal glycoprotein of Mus musculus (Mouse).